The chain runs to 217 residues: Protein-L-isoaspartate O-methyltransferase (217 aa).

The active site involves Ser-64.

Belongs to the methyltransferase superfamily. L-isoaspartyl/D-aspartyl protein methyltransferase family.

It is found in the cytoplasm. It catalyses the reaction [protein]-L-isoaspartate + S-adenosyl-L-methionine = [protein]-L-isoaspartate alpha-methyl ester + S-adenosyl-L-homocysteine. Catalyzes the methyl esterification of L-isoaspartyl residues in peptides and proteins that result from spontaneous decomposition of normal L-aspartyl and L-asparaginyl residues. It plays a role in the repair and/or degradation of damaged proteins. This chain is Protein-L-isoaspartate O-methyltransferase, found in Azorhizobium caulinodans (strain ATCC 43989 / DSM 5975 / JCM 20966 / LMG 6465 / NBRC 14845 / NCIMB 13405 / ORS 571).